A 500-amino-acid polypeptide reads, in one-letter code: Low-density lipoprotein receptor-related protein 11 (500 aa).

The signal sequence occupies residues 1-37 (MASVAQESAGSQRRLPPRHGALRGLLLLCLWLPSGRA). The Extracellular segment spans residues 38–450 (ALPPAAPLSE…GGEHPAPETG (413 aa)). The region spanning 99 to 184 (AMPDAIIRTK…FALHSGYSSY (86 aa)) is the MANSC domain. Asn-164 and Asn-291 each carry an N-linked (GlcNAc...) asparagine glycan. Residues 210-305 (PLSKAGQDVV…VLRAAYSTGG (96 aa)) form the PKD domain. The LDL-receptor class A domain maps to 309-345 (TCSRYHFFCDDGCCIDITLACDGVQQCPDGSDEDFCQ). Disulfide bonds link Cys-310–Cys-322, Cys-317–Cys-335, and Cys-329–Cys-344. The segment at 358-445 (AASPALPRTT…KGDGGGGEHP (88 aa)) is disordered. Asn-401 carries an N-linked (GlcNAc...) asparagine glycan. Residues 451–473 (AVLPLALGLAITALLLLMVACRL) form a helical membrane-spanning segment. At 474–500 (RLVKQKLKKARPITSEESDYLINGMYL) the chain is on the cytoplasmic side. Ser-491 is subject to Phosphoserine.

It belongs to the LDLR family.

It is found in the membrane. This chain is Low-density lipoprotein receptor-related protein 11 (LRP11), found in Homo sapiens (Human).